The primary structure comprises 95 residues: Acylphosphatase (95 aa).

Positions 5-93 constitute an Acylphosphatase-like domain; sequence RAHVFIRGKV…GEFKDFKILP (89 aa). Catalysis depends on residues Arg20 and Asn38.

Belongs to the acylphosphatase family.

The enzyme catalyses an acyl phosphate + H2O = a carboxylate + phosphate + H(+). This Pyrobaculum aerophilum (strain ATCC 51768 / DSM 7523 / JCM 9630 / CIP 104966 / NBRC 100827 / IM2) protein is Acylphosphatase (acyP).